The primary structure comprises 954 residues: Glycine dehydrogenase (decarboxylating) (954 aa).

Residue Lys-704 is modified to N6-(pyridoxal phosphate)lysine.

Belongs to the GcvP family. The glycine cleavage system is composed of four proteins: P, T, L and H. Requires pyridoxal 5'-phosphate as cofactor.

The catalysed reaction is N(6)-[(R)-lipoyl]-L-lysyl-[glycine-cleavage complex H protein] + glycine + H(+) = N(6)-[(R)-S(8)-aminomethyldihydrolipoyl]-L-lysyl-[glycine-cleavage complex H protein] + CO2. Its function is as follows. The glycine cleavage system catalyzes the degradation of glycine. The P protein binds the alpha-amino group of glycine through its pyridoxal phosphate cofactor; CO(2) is released and the remaining methylamine moiety is then transferred to the lipoamide cofactor of the H protein. In Rhizobium etli (strain ATCC 51251 / DSM 11541 / JCM 21823 / NBRC 15573 / CFN 42), this protein is Glycine dehydrogenase (decarboxylating).